We begin with the raw amino-acid sequence, 827 residues long: Histone acetyltransferase MOF (827 aa).

4 disordered regions span residues 1-190, 237-276, 288-309, and 324-360; these read MSEA…SDTV, QLGL…AVYL, STPG…MPPP, and EAIS…TSRE. Acidic residues predominate over residues 19-30; sequence PIEEEHEPEQEP. Positions 55 to 69 are enriched in polar residues; the sequence is LDVSGSDQSAEQSLD. The segment covering 103–116 has biased composition (low complexity); the sequence is SSTSTSSTRSSSSS. Residues 121-133 are compositionally biased toward acidic residues; it reads VSEAEEAPPEPEP. A compositionally biased stretch (basic and acidic residues) spans 141 to 150; that stretch reads QEEKKEDGQD. Residues 176–186 show a composition bias toward acidic residues; sequence DQEIETEDEPS. Residues 243–253 are compositionally biased toward pro residues; sequence AAPPPPPPPPA. Acidic residues predominate over residues 326–350; sequence ISDDSSETSSSDDDEEEEEDEDDAL. Residue Lys-372 forms a Glycyl lysine isopeptide (Lys-Gly) (interchain with G-Cter in ubiquitin) linkage. One can recognise a Tudor-knot domain in the interval 382–433; sequence IYFIRREDGTVHRGQVLQSRTTENAAAPDEYYVHYVGLNRRLDGWVGRHRIS. Glycyl lysine isopeptide (Lys-Gly) (interchain with G-Cter in ubiquitin) cross-links involve residues Lys-483, Lys-532, and Lys-539. Residues 538 to 813 form the MYST-type HAT domain; that stretch reads TKIKYIDKLQ…IDTDYLVWSP (276 aa). The C2HC MYST-type zinc-finger motif lies at 571-596; sequence LYVCEYCLKYMRFRSSYAYHLHECDR. Zn(2+)-binding residues include Cys-574, Cys-577, His-590, and Cys-594. Position 638 is an N6-acetyllysine; by autocatalysis (Lys-638). Residues Ile-681, Arg-689, Lys-690, Gly-691, Gly-693, and Lys-694 each contribute to the acetyl-CoA site. Residue Glu-714 is the Proton donor/acceptor of the active site. Lys-715 is covalently cross-linked (Glycyl lysine isopeptide (Lys-Gly) (interchain with G-Cter in ubiquitin)). Acetyl-CoA contacts are provided by Ser-718 and Ser-727. A Glycyl lysine isopeptide (Lys-Gly) (interchain with G-Cter in ubiquitin) cross-link involves residue Lys-749. Tyr-774 contacts acetyl-CoA. Residues Lys-776, Lys-798, and Lys-801 each participate in a glycyl lysine isopeptide (Lys-Gly) (interchain with G-Cter in ubiquitin) cross-link. Lys-798 serves as a coordination point for acetyl-CoA.

This sequence belongs to the MYST (SAS/MOZ) family. As to quaternary structure, component of the male-specific lethal (MSL) histone acetyltransferase complex, composed of mof, mle, msl-1, msl-2 and msl-3 proteins, as well as roX1 and roX2 non-coding RNAs. Component of a maternal MSL subcomplex composed of mof, msl-1 and msl-3. Component of the non-specific lethal (NLS) histone acetyltransferase complex at least composed of mof, nls1, dgt1/NSL2, Rcd1/NSL3, Rcd5/MCRS2, MBD-R2 and wds. In males, interacts with nucleoporin Mgtor. In terms of processing, autoacetylation at Lys-638 is required for binding histone H4 with high affinity and for proper function. Post-translationally, ubiquitinated by msl-2.

Its subcellular location is the nucleus. The protein resides in the chromosome. The catalysed reaction is L-lysyl-[histone] + acetyl-CoA = N(6)-acetyl-L-lysyl-[histone] + CoA + H(+). Functionally, histone acetyltransferase that catalyzes the formation of the majority of histone H4 acetylation at 'Lys-16' (H4K16ac), an epigenetic mark that prevents chromatin compaction and constitutes the only acetylation mark intergenerationally transmitted. Catalytic component of the male-specific lethal (MSL) complex, a multiprotein complex essential for elevating transcription of the single X chromosome in the male (X chromosome dosage compensation). The MSL complex specifically associates with the single X chromosome in males and mediates formation of H4K16ac, promoting a two-fold activation of X chromosome. Dosage compensation ensures that males with a single X chromosome have the same amount of most X-linked gene products as females with two X chromosomes. In oocytes, mof is also part of a maternal MSL subcomplex that mediates H4K16ac deposition for intergenerational transmission: H4K16ac prepares the chromatin landscape for establishment of nucleosome accessibility and poises genes for future activation. H4K16ac constitutes the only acetylation mark maintained from oocytes to fertilized embryos. Mof also constitutes the catalytic component of the non-specific lethal (NLS) complex, which promotes expression of housekeeping genes on X chromosome and autosomes. The NSL complex promotes strong expression of housekeeping genes compared to the two-fold expression mediated by the MSL complex on X chromosome, suggesting that the activation potential of mof is constrained in the context of dosage compensation. This Drosophila melanogaster (Fruit fly) protein is Histone acetyltransferase MOF.